The primary structure comprises 1054 residues: Filament-like plant protein 6 (1054 aa).

Coiled coils occupy residues 64-139 (VQIK…VKQH), 174-200 (AEDR…KDHE), and 250-341 (SNML…RKKL). Disordered regions lie at residues 359-390 (RDSG…GSEF) and 448-506 (EAQL…KEKD). 3 stretches are compositionally biased toward low complexity: residues 371-380 (VKVSSPCKSP), 450-461 (QLQQNNSQKSSL), and 470-494 (SNPS…GSLS). The stretch at 389–463 (EFSLDNAQKF…NNSQKSSLEV (75 aa)) forms a coiled coil. 2 coiled-coil regions span residues 637–666 (QNLV…RIHD) and 788–944 (ESDS…IFVL). Residues 951–1054 (FRPQPEQMRS…SRFFSSKSGY (104 aa)) form a disordered region. Residues 1007 to 1032 (PSDSETSDTTTSPSRVGSRLSRSGSS) show a composition bias toward low complexity.

It belongs to the FPP family. As to quaternary structure, interacts with WPP/MAF proteins.

This Arabidopsis thaliana (Mouse-ear cress) protein is Filament-like plant protein 6 (FPP6).